The following is a 396-amino-acid chain: MSEYSLFTSESVSEGHPDKIADQISDAVLDAIIAQDKHARVAVETLVKTGVAIVAGEVTTSAWVDLEQIVRDVICDIGYTSSDVGFDGATCGVMNIIGKQSPDINQGVDRAKPEDQGAGDQGLMFGYASNETEVLMPAPITFSHQLVQRQAEARKSGLLPWLRPDAKSQVTCRYEGGKVVGIDAVVLSTQHNPEVSYSDLREGVMELIVKHVLPAELLSKDTQFHINPTGQFIIGGPVGDCGLTGRKIIVDSYGGMARHGGGAFSGKDPSKVDRSAAYAGRYVAKNIVAAGLAERCEIQVSYAIGVAQPTSISLNTFGTGKISDDKIIKLVREVFDLRPYAITTMLDLLHPMYQETAAYGHFGRAPQTKTVGDDTFTTFTWEKTDRADTLRAAAGL.

Histidine 16 serves as a coordination point for ATP. Aspartate 18 serves as a coordination point for Mg(2+). Glutamate 44 provides a ligand contact to K(+). L-methionine is bound by residues glutamate 57 and glutamine 100. The segment at glutamine 100–arginine 110 is flexible loop. ATP contacts are provided by residues aspartate 165–lysine 167, aspartate 240, arginine 246–lysine 247, alanine 263, and lysine 267. Aspartate 240 contacts L-methionine. Lysine 271 is a binding site for L-methionine.

The protein belongs to the AdoMet synthase family. As to quaternary structure, homotetramer; dimer of dimers. Requires Mg(2+) as cofactor. K(+) serves as cofactor.

It localises to the cytoplasm. It carries out the reaction L-methionine + ATP + H2O = S-adenosyl-L-methionine + phosphate + diphosphate. The protein operates within amino-acid biosynthesis; S-adenosyl-L-methionine biosynthesis; S-adenosyl-L-methionine from L-methionine: step 1/1. Its function is as follows. Catalyzes the formation of S-adenosylmethionine (AdoMet) from methionine and ATP. The overall synthetic reaction is composed of two sequential steps, AdoMet formation and the subsequent tripolyphosphate hydrolysis which occurs prior to release of AdoMet from the enzyme. The sequence is that of S-adenosylmethionine synthase from Pseudomonas fluorescens (strain ATCC BAA-477 / NRRL B-23932 / Pf-5).